The sequence spans 139 residues: MPRGVYLGFDFGYKRIGVAVGQRLTCSASPLSTIEAKAGIPDWNTIQKVITQWNPQALIVGLPTCIDDRELYTTSAARHFAKQLHKRFSLPVHLVDERLSTVEARGYLFEQGGYRQIKKAEVDSIAACVILEQWLQQSE.

Belongs to the YqgF nuclease family.

It localises to the cytoplasm. Could be a nuclease involved in processing of the 5'-end of pre-16S rRNA. The sequence is that of Putative pre-16S rRNA nuclease from Legionella pneumophila (strain Paris).